The primary structure comprises 121 residues: Inner membrane protein YhaH (121 aa).

Residues 1–23 (MDWYLKVLKNYVGFRGRARRKEY) lie on the Periplasmic side of the membrane. A helical membrane pass occupies residues 24–44 (WMFILVNIIFTFVLGLLDKML). The Cytoplasmic portion of the chain corresponds to 45-49 (GWQRA). A helical membrane pass occupies residues 50 to 70 (GGEGILTTIYGILVFLPWWAV). Topologically, residues 71–80 (QFRRLHDTDR) are periplasmic. The helical transmembrane segment at 81 to 101 (SAWWALLFLIPFIGWLIIIVF) threads the bilayer. The Cytoplasmic segment spans residues 102–121 (NCQAGTPGENRFGPDPKLEP).

To E.coli YhaI.

The protein localises to the cell inner membrane. This Escherichia coli O157:H7 protein is Inner membrane protein YhaH (yhaH).